A 264-amino-acid polypeptide reads, in one-letter code: uncharacterized protein (264 aa).

The chain crosses the membrane as a helical span at residues 7–27 (LTLGICLVLLIILIVGYVIMT).

This sequence belongs to the staphylococcal tandem lipoprotein family.

It is found in the cell membrane. This is an uncharacterized protein from Staphylococcus aureus (strain N315).